The chain runs to 379 residues: UDP-4-amino-4-deoxy-L-arabinose--oxoglutarate aminotransferase (379 aa).

Residue K182 is modified to N6-(pyridoxal phosphate)lysine.

The protein belongs to the DegT/DnrJ/EryC1 family. ArnB subfamily. In terms of assembly, homodimer. Pyridoxal 5'-phosphate serves as cofactor.

It catalyses the reaction UDP-4-amino-4-deoxy-beta-L-arabinose + 2-oxoglutarate = UDP-beta-L-threo-pentopyranos-4-ulose + L-glutamate. Its pathway is nucleotide-sugar biosynthesis; UDP-4-deoxy-4-formamido-beta-L-arabinose biosynthesis; UDP-4-deoxy-4-formamido-beta-L-arabinose from UDP-alpha-D-glucuronate: step 2/3. It functions in the pathway bacterial outer membrane biogenesis; lipopolysaccharide biosynthesis. Functionally, catalyzes the conversion of UDP-4-keto-arabinose (UDP-Ara4O) to UDP-4-amino-4-deoxy-L-arabinose (UDP-L-Ara4N). The modified arabinose is attached to lipid A and is required for resistance to polymyxin and cationic antimicrobial peptides. In Escherichia coli O1:K1 / APEC, this protein is UDP-4-amino-4-deoxy-L-arabinose--oxoglutarate aminotransferase.